Consider the following 474-residue polypeptide: Aspartyl/glutamyl-tRNA(Asn/Gln) amidotransferase subunit B (474 aa).

The protein belongs to the GatB/GatE family. GatB subfamily. Heterotrimer of A, B and C subunits.

It carries out the reaction L-glutamyl-tRNA(Gln) + L-glutamine + ATP + H2O = L-glutaminyl-tRNA(Gln) + L-glutamate + ADP + phosphate + H(+). The catalysed reaction is L-aspartyl-tRNA(Asn) + L-glutamine + ATP + H2O = L-asparaginyl-tRNA(Asn) + L-glutamate + ADP + phosphate + 2 H(+). In terms of biological role, allows the formation of correctly charged Asn-tRNA(Asn) or Gln-tRNA(Gln) through the transamidation of misacylated Asp-tRNA(Asn) or Glu-tRNA(Gln) in organisms which lack either or both of asparaginyl-tRNA or glutaminyl-tRNA synthetases. The reaction takes place in the presence of glutamine and ATP through an activated phospho-Asp-tRNA(Asn) or phospho-Glu-tRNA(Gln). The sequence is that of Aspartyl/glutamyl-tRNA(Asn/Gln) amidotransferase subunit B from Methanospirillum hungatei JF-1 (strain ATCC 27890 / DSM 864 / NBRC 100397 / JF-1).